Consider the following 256-residue polypeptide: Imidazole glycerol phosphate synthase subunit hisF1 (256 aa).

Catalysis depends on residues Asp-12 and Asp-131.

Belongs to the HisA/HisF family. As to quaternary structure, heterodimer of HisH and HisF.

The protein localises to the cytoplasm. It catalyses the reaction 5-[(5-phospho-1-deoxy-D-ribulos-1-ylimino)methylamino]-1-(5-phospho-beta-D-ribosyl)imidazole-4-carboxamide + L-glutamine = D-erythro-1-(imidazol-4-yl)glycerol 3-phosphate + 5-amino-1-(5-phospho-beta-D-ribosyl)imidazole-4-carboxamide + L-glutamate + H(+). It functions in the pathway amino-acid biosynthesis; L-histidine biosynthesis; L-histidine from 5-phospho-alpha-D-ribose 1-diphosphate: step 5/9. Its function is as follows. IGPS catalyzes the conversion of PRFAR and glutamine to IGP, AICAR and glutamate. The HisF subunit catalyzes the cyclization activity that produces IGP and AICAR from PRFAR using the ammonia provided by the HisH subunit. This Pseudomonas aeruginosa (strain ATCC 15692 / DSM 22644 / CIP 104116 / JCM 14847 / LMG 12228 / 1C / PRS 101 / PAO1) protein is Imidazole glycerol phosphate synthase subunit hisF1 (hisF1).